A 66-amino-acid polypeptide reads, in one-letter code: Prokaryotic ubiquitin-like protein Pup (66 aa).

The span at 1-10 shows a compositional bias: low complexity; that stretch reads MAGQEQQSSS. The tract at residues 1–39 is disordered; that stretch reads MAGQEQQSSSPREEEHEVADAPVPVPSSPQASAHTDGVD. The segment at 23-60 is ARC ATPase binding; that stretch reads VPVPSSPQASAHTDGVDDLLDEIDGVLESNAEEFVRGF. Deamidated glutamine is present on Gln-66. Residue Gln-66 forms an Isoglutamyl lysine isopeptide (Gln-Lys) (interchain with K-? in acceptor proteins) linkage.

Belongs to the prokaryotic ubiquitin-like protein family. Strongly interacts with the proteasome-associated ATPase ARC through a hydrophobic interface; the interacting region of Pup lies in its C-terminal half. There is one Pup binding site per ARC hexamer ring. In terms of processing, is modified by deamidation of its C-terminal glutamine to glutamate by the deamidase Dop, a prerequisite to the subsequent pupylation process.

It functions in the pathway protein degradation; proteasomal Pup-dependent pathway. Its function is as follows. Protein modifier that is covalently attached to lysine residues of substrate proteins, thereby targeting them for proteasomal degradation. The tagging system is termed pupylation. The sequence is that of Prokaryotic ubiquitin-like protein Pup from Renibacterium salmoninarum (strain ATCC 33209 / DSM 20767 / JCM 11484 / NBRC 15589 / NCIMB 2235).